The sequence spans 172 residues: Myosin regulatory light chain 12B (172 aa).

Positions 1–16 are enriched in basic residues; it reads MSSKKAKTKTTKKRPQ. A disordered region spans residues 1–20; the sequence is MSSKKAKTKTTKKRPQRATS. At Thr-19 the chain carries Phosphothreonine; by MLCK and ZIPK/DAPK3. Phosphoserine; by MLCK and ZIPK/DAPK3 is present on Ser-20. 3 EF-hand domains span residues 29–64, 98–133, and 134–169; these read SQIQ…LGKN, DPED…MGDR, and FTDE…GAKD. Ca(2+)-binding residues include Asp-42, Asn-44, Asp-46, and Asp-53.

In terms of assembly, myosin is a hexamer of 2 heavy chains and 4 light chains: interacts with myosin heavy chain MYO19. In terms of processing, phosphorylation increases the actin-activated myosin ATPase activity and thereby regulates the contractile activity. It is required to generate the driving force in the migration of the cells but not necessary for localization of myosin-2 at the leading edge. Phosphorylation is reduced following epigallocatechin-3-O-gallate treatment. Ubiquitously expressed in various hematopoietic cells.

Myosin regulatory subunit that plays an important role in regulation of both smooth muscle and nonmuscle cell contractile activity via its phosphorylation. Phosphorylation triggers actin polymerization in vascular smooth muscle. Implicated in cytokinesis, receptor capping, and cell locomotion. The polypeptide is Myosin regulatory light chain 12B (MYL12B) (Homo sapiens (Human)).